A 499-amino-acid polypeptide reads, in one-letter code: MTISYTLDVSQTNLQSFFSLLLRWRGSVWKAVFGQLAVWTAVFLLISCIYRYMLSPSQQDVFEQLIRYFDNKLDANIPLTFLLGFFVSFVVARWGSILNGIGWIDDASLLFATYIRGADEETRVIRRNLVRYLVLSQALVLRDISMQVRKRFPTMDTLAASGLMTHEEMDILDHIKDPYSRYWTSIQWSLNLVYECQKKGKVDSYYLMNKIVDEIGKFRHGLASLLKYDWVPVPLVYPQVIFLAVRIYFMICLIGRQFIVTGPNPSGIDLWLPITTMVQFLVYMGWMKVAEALLNPLGEDDDDLECNYIIDKNLITGLSIVDTMWKHDDTGYSMVEEHMAKTPAQKKDEFWGIDKIAPLYSMESAERSVHPLVGSASKINLVKNKKEIVMTPHKNKLSELDPSEQKTYLRRVNVSDHNAKHAKQRGLERANSPDKCLSKMRSRSNGKFRTSANGSQNGVDLWTRAGDIEMNVATSNPNQVHPHSIAVFPPEEQQTTSRH.

Helical transmembrane passes span 29 to 49, 77 to 97, 235 to 255, and 267 to 287; these read WKAV…ISCI, IPLT…WGSI, LVYP…CLIG, and GIDL…MGWM. The segment covering 417–432 has biased composition (basic and acidic residues); that stretch reads HNAKHAKQRGLERANS. Disordered stretches follow at residues 417-455 and 474-499; these read HNAK…ANGS and TSNP…TSRH.

It belongs to the anion channel-forming bestrophin (TC 1.A.46) family. Calcium-sensitive chloride channel subfamily. Forms oligomers.

Its subcellular location is the cell membrane. Functionally, forms chloride channels. This Caenorhabditis elegans protein is Bestrophin homolog 22 (best-22).